The primary structure comprises 877 residues: MGPLGRETWAQRLGTFRASPSAFMAGPEGEDLGRDLLSDLRSEKLSEPMKVALLALSLEYPDQLWPDAPAAEAAATSLLDTLVLLPPRPSALRRPLLLAATTALAAGGALNPASGASGRLLPLLLGLASGRDLGRSFCPASEQRPLQATAWECLRELESCRPGLLGGCLGLLRALLGREGPAQPLSLLLALALRNALVIQARAGAGLQGLLTAGESSMEGGPWNWMLAEEGEVHLQPQAPSWPAAEEDECGLAALELSPEEARELRATVAQLLDASYLLTPVAQAQLLWLLGWALRGLRGQPPVLFKPQLVRLLGTAQLTLLHAMLALKAAFGEALFTAQDEALLLRRLTLAAQHPALPLPTHLFYLHCLLNFPENWPLGPTGEEAAPLLLGSQLCRGLLPSLLHEPMALLARLHLLCLLCVEDEEKEGKGQDRSPRHYLEELLAGLRQRAALDGGPRALATLCFQASYLVAHCLAGQPVVLIPLTQGLAQLYRARPALAPHFVDLLDHVGPELQEPLRVALRQEVASRPGREEALRWHLQMLASVADGDAQSATLSFLRAAAAHCTDWGLQQALLRVCRALLRAGVGGGLADLLQELARQLEDPDGQDHARLYYILLAHLAGPKLGVALGPSLAAPALASSLVAENQGFAAALMVQEAPAPIRLSVGPRRAEGAVPVLRLQVEVLEPVYSLELRFRVEGQLYAPLGAVHVPCLCPGRPTRPLLLPLQPRRPAPARLAVRALYSTPSGLTCHAHLPPLLVAFADLFLPFPQPPEGAQLDFFEELWDSCLPKGTESRLWCPLGPEGLEALVSRHLEPFVVVAQPPVSYLVAIRLPPDSRLLLRLEAAQADGVPVALRTDDWAVLPLAGDYLRGLSAAG.

As to quaternary structure, probably part of the adaptor protein complex 5 (AP-5), a tetramer composed of AP5B1, AP5M1, AP5S1 and AP5Z1. Interacts with ZFYVE26 and SPG11.

As part of AP-5, a probable fifth adaptor protein complex, it may be involved in endosomal transport. The chain is AP-5 complex subunit beta-1 (AP5B1) from Bos taurus (Bovine).